A 379-amino-acid chain; its full sequence is Presenilin-associated rhomboid-like protein, mitochondrial (379 aa).

The N-terminal 52 residues, 1–52 (MAWRGWAQRGWGCGQAWAASVGGRSCEELTAALTPPRLLGRRFNFFIQQKCG), are a transit peptide targeting the mitochondrion. Topologically, residues 53-101 (FRKAPRKVEPRRSDTGTSGEAYKRSALIPPVEETVFYPSPYPIRSLIKP) are mitochondrial matrix. Ser-65 is subject to Phosphoserine. Thr-69 carries the phosphothreonine modification. Phosphoserine is present on Ser-70. A helical membrane pass occupies residues 102–121 (LFFTVGFTGCAFGSAAIWQY). The Mitochondrial intermembrane segment spans residues 122–167 (ESLKSRVQSYFDGIKADWLDSIRPQKEGDFRKEINKWWNNLSDGQR). A helical transmembrane segment spans residues 168 to 187 (TVTGIIAANVLVFCLWRVPS). At 188–207 (LQRTMIRYFTSNPASKVLCS) the chain is on the mitochondrial matrix side. Residues 208–230 (PMLLSTFSHFSLFHMAANMYVLW) form a helical membrane-spanning segment. Residues 231 to 244 (SFSSSIVNILGQEQ) lie on the Mitochondrial intermembrane side of the membrane. Residues 245–262 (FMAVYLSAGVISNFVSYV) traverse the membrane as a helical segment. Topologically, residues 263–273 (GKVATGRYGPS) are mitochondrial matrix. Residues 274–292 (LGASGAIMTVLAAVCTKIP) traverse the membrane as a helical segment. Ser-277 acts as the Nucleophile in catalysis. The Mitochondrial intermembrane segment spans residues 293–295 (EGR). The chain crosses the membrane as a helical span at residues 296-318 (LAIIFLPMFTFTAGNALKAIIAM). Over 319–332 (DTAGMILGWKFFDH) the chain is Mitochondrial matrix. A helical transmembrane segment spans residues 333-354 (AAHLGGALFGIWYVTYGHELIW). His-335 is an active-site residue. The Mitochondrial intermembrane segment spans residues 355–379 (KNREPLVKIWHEIRTNGPKKGGGSK).

This sequence belongs to the peptidase S54 family. As to quaternary structure, interacts with PSEN1 and PSEN2. Binds OPA1. P-beta is proteolytically processed (beta-cleavage) in a PARL-dependent manner.

The protein resides in the mitochondrion inner membrane. Its subcellular location is the nucleus. It carries out the reaction Cleaves type-1 transmembrane domains using a catalytic dyad composed of serine and histidine that are contributed by different transmembrane domains.. In terms of biological role, required for the control of apoptosis during postnatal growth. Essential for proteolytic processing of an antiapoptotic form of OPA1 which prevents the release of mitochondrial cytochrome c in response to intrinsic apoptotic signals. Required for the maturation of PINK1 into its 52kDa mature form after its cleavage by mitochondrial-processing peptidase (MPP). Promotes cleavage of serine/threonine-protein phosphatase PGAM5 in damaged mitochondria in response to loss of mitochondrial membrane potential. Mediates differential cleavage of PINK1 and PGAM5 depending on the health status of mitochondria, disassociating from PINK1 and associating with PGAM5 in response to mitochondrial membrane potential loss. Required for processing of CLPB into a form with higher protein disaggregase activity by removing an autoinhibitory N-terminal peptide. Promotes processing of DIABLO/SMAC in the mitochondrion which is required for DIABLO apoptotic activity. Also required for cleavage of STARD7 and TTC19. Promotes changes in mitochondria morphology regulated by phosphorylation of P-beta domain. The chain is Presenilin-associated rhomboid-like protein, mitochondrial (PARL) from Pongo abelii (Sumatran orangutan).